A 311-amino-acid polypeptide reads, in one-letter code: Regulator of rDNA transcription protein 6 (311 aa).

A run of 2 helical transmembrane segments spans residues 32-52 (PHLL…SAEL) and 271-291 (YLIV…IIVT).

It localises to the membrane. May be involved in the modulation of rDNA transcription. This chain is Regulator of rDNA transcription protein 6 (RRT6), found in Saccharomyces cerevisiae (strain ATCC 204508 / S288c) (Baker's yeast).